The primary structure comprises 193 residues: Imidazoleglycerol-phosphate dehydratase (193 aa).

This sequence belongs to the imidazoleglycerol-phosphate dehydratase family.

The protein resides in the cytoplasm. The enzyme catalyses D-erythro-1-(imidazol-4-yl)glycerol 3-phosphate = 3-(imidazol-4-yl)-2-oxopropyl phosphate + H2O. It participates in amino-acid biosynthesis; L-histidine biosynthesis; L-histidine from 5-phospho-alpha-D-ribose 1-diphosphate: step 6/9. This chain is Imidazoleglycerol-phosphate dehydratase, found in Methanospirillum hungatei JF-1 (strain ATCC 27890 / DSM 864 / NBRC 100397 / JF-1).